We begin with the raw amino-acid sequence, 252 residues long: MSDWNPSLYLHFAAERSRPAVELLARVPLENVDYVADLGCGPGNSTALLHQRWPAARITGIDSSPAMIAEARSALPDCQFVEADIRNWQPEQALDLIFANASLQWLPDHYELFPHLVSLLNPQGVLAVQMPDNWLEPTHVLMREVAWEQNYPDRGRESLAGVHAYYDILSEAGCEVDIWRTTYYHQMPSHQAIIDWVTATGLRPWLQDLTESEQQLFLTRYHQMLKEQYPLQENGQILLAFPRLFIVARRTE.

It belongs to the methyltransferase superfamily. Tam family. In terms of assembly, monomer.

Its subcellular location is the cytoplasm. The enzyme catalyses trans-aconitate + S-adenosyl-L-methionine = (E)-3-(methoxycarbonyl)pent-2-enedioate + S-adenosyl-L-homocysteine. In terms of biological role, catalyzes the S-adenosylmethionine monomethyl esterification of trans-aconitate at high affinity and of cis-aconitate, isocitrate, and citrate at lower velocities and affinities. The polypeptide is Trans-aconitate 2-methyltransferase (tam) (Escherichia coli O157:H7).